A 351-amino-acid polypeptide reads, in one-letter code: UDP-N-acetylglucosamine--N-acetylmuramyl-(pentapeptide) pyrophosphoryl-undecaprenol N-acetylglucosamine transferase (351 aa).

UDP-N-acetyl-alpha-D-glucosamine contacts are provided by residues 12–14, N124, R160, S188, I239, 258–263, and Q283; these read TGG and ALTVCE.

This sequence belongs to the glycosyltransferase 28 family. MurG subfamily.

The protein localises to the cell inner membrane. The catalysed reaction is di-trans,octa-cis-undecaprenyl diphospho-N-acetyl-alpha-D-muramoyl-L-alanyl-D-glutamyl-meso-2,6-diaminopimeloyl-D-alanyl-D-alanine + UDP-N-acetyl-alpha-D-glucosamine = di-trans,octa-cis-undecaprenyl diphospho-[N-acetyl-alpha-D-glucosaminyl-(1-&gt;4)]-N-acetyl-alpha-D-muramoyl-L-alanyl-D-glutamyl-meso-2,6-diaminopimeloyl-D-alanyl-D-alanine + UDP + H(+). It functions in the pathway cell wall biogenesis; peptidoglycan biosynthesis. Functionally, cell wall formation. Catalyzes the transfer of a GlcNAc subunit on undecaprenyl-pyrophosphoryl-MurNAc-pentapeptide (lipid intermediate I) to form undecaprenyl-pyrophosphoryl-MurNAc-(pentapeptide)GlcNAc (lipid intermediate II). This chain is UDP-N-acetylglucosamine--N-acetylmuramyl-(pentapeptide) pyrophosphoryl-undecaprenol N-acetylglucosamine transferase, found in Actinobacillus pleuropneumoniae serotype 5b (strain L20).